Reading from the N-terminus, the 212-residue chain is uncharacterized protein (212 aa).

Disordered stretches follow at residues 1-148 (MEKD…LNDL) and 168-190 (EVVTDAKKEEKPSQMDVEDLSED). The segment covering 61–70 (KELESEDQGK) has biased composition (basic and acidic residues). The span at 71–85 (DPSSNAEDASCQKNL) shows a compositional bias: polar residues. 3 stretches are compositionally biased toward basic and acidic residues: residues 99–115 (LGHESGKQDPEREKSDL), 124–144 (EGEHADGGLQEAKEQEAESIK), and 168–180 (EVVTDAKKEEKPS).

This is an uncharacterized protein from Homo sapiens (Human).